A 302-amino-acid chain; its full sequence is Protein FdhE homolog (302 aa).

Belongs to the FdhE family.

It is found in the cytoplasm. In terms of biological role, necessary for formate dehydrogenase activity. The sequence is that of Protein FdhE homolog from Shewanella oneidensis (strain ATCC 700550 / JCM 31522 / CIP 106686 / LMG 19005 / NCIMB 14063 / MR-1).